We begin with the raw amino-acid sequence, 288 residues long: Energy-coupling factor transporter ATP-binding protein EcfA3 (288 aa).

The ABC transporter domain occupies I3–R245. G40–S47 contacts ATP.

The protein belongs to the ABC transporter superfamily. Energy-coupling factor EcfA family. As to quaternary structure, forms a stable energy-coupling factor (ECF) transporter complex composed of 2 membrane-embedded substrate-binding proteins (S component), 2 ATP-binding proteins (A component) and 2 transmembrane proteins (T component).

Its subcellular location is the cell membrane. In terms of biological role, ATP-binding (A) component of a common energy-coupling factor (ECF) ABC-transporter complex. Unlike classic ABC transporters this ECF transporter provides the energy necessary to transport a number of different substrates. The chain is Energy-coupling factor transporter ATP-binding protein EcfA3 from Oenococcus oeni (strain ATCC BAA-331 / PSU-1).